Reading from the N-terminus, the 304-residue chain is uncharacterized protein (304 aa).

The segment covering 1 to 10 (MLWAHRKKRK) has biased composition (basic residues). The tract at residues 1–28 (MLWAHRKKRKAATETTEDKPLESHRAND) is disordered. A compositionally biased stretch (basic and acidic residues) spans 16–27 (TEDKPLESHRAN). Residue S39 is modified to Phosphoserine. Residues 91–101 (KQKISGSSMTK) show a composition bias toward polar residues. Disordered stretches follow at residues 91 to 115 (KQKI…SMED), 138 to 160 (SMLQ…ISPE), and 190 to 304 (SHTV…IYGS). Residues 151 to 160 (HAESRNISPE) are compositionally biased toward basic and acidic residues. S158 bears the Phosphoserine mark. Positions 195 to 206 (SQSRHSNQSHHS) are enriched in low complexity. The span at 208–223 (PSHQSNQSHPVYSSYQ) shows a compositional bias: polar residues. Over residues 229 to 248 (HLSPQSYPSYSSHQSHPGHS) the composition is skewed to low complexity. The span at 249 to 263 (NHQGHSGLSSHQTHL) shows a compositional bias: polar residues. Residues 264 to 292 (GHSNHQGHPGHSSHQSHQGQPGHPSHQSH) are compositionally biased toward low complexity.

This is an uncharacterized protein from Mus musculus (Mouse).